Reading from the N-terminus, the 157-residue chain is Large ribosomal subunit protein uL15 (157 aa).

The interval 1–41 (MKLHELSDNPGATKKRKRVGRGPGSGTGKMGGRGIKGQKSR) is disordered. Gly residues predominate over residues 21–35 (RGPGSGTGKMGGRGI).

This sequence belongs to the universal ribosomal protein uL15 family. As to quaternary structure, part of the 50S ribosomal subunit.

Functionally, binds to the 23S rRNA. This is Large ribosomal subunit protein uL15 from Jannaschia sp. (strain CCS1).